Consider the following 581-residue polypeptide: Arginine--tRNA ligase (581 aa).

Positions 126-136 (PNLAKEMHVGH) match the 'HIGH' region motif.

Belongs to the class-I aminoacyl-tRNA synthetase family. Monomer.

It is found in the cytoplasm. It carries out the reaction tRNA(Arg) + L-arginine + ATP = L-arginyl-tRNA(Arg) + AMP + diphosphate. In Shewanella frigidimarina (strain NCIMB 400), this protein is Arginine--tRNA ligase.